The sequence spans 159 residues: Trafficking protein particle complex subunit 6A (159 aa).

S33 carries the phosphoserine modification.

It belongs to the TRAPP small subunits family. BET3 subfamily. Part of the multisubunit transport protein particle (TRAPP) complex. Heterodimer with TRAPPC3. The heterodimer TRAPPC3-TRAPPC6A interacts with TRAPPC2L. Interacts with TRAPPC2L. As to expression, ubiquitous, with lowest expression in skeletal muscle and brain and highest in kidney, liver and testis, as well as in cultured melanocytes.

The protein localises to the golgi apparatus. It localises to the cis-Golgi network. Its subcellular location is the endoplasmic reticulum. In terms of biological role, may play a role in vesicular transport during the biogenesis of melanosomes. The protein is Trafficking protein particle complex subunit 6A of Mus musculus (Mouse).